The sequence spans 149 residues: MGRMHTHRHGKSHSIRPATLRAPSWITQSPAEIEELVIKYSKDGLTPSQIGIKLRDQHSIPLIKPITKKTIGEILEENDLKAEMPEDLENIVKKAVGLQRHLKENKGDRRNVRSLELIEAKVHRLSVYYKKIGRIPATWKYKSVVAQLE.

Positions 1–14 (MGRMHTHRHGKSHS) are enriched in basic residues. Residues 1 to 20 (MGRMHTHRHGKSHSIRPATL) are disordered.

It belongs to the universal ribosomal protein uS15 family. As to quaternary structure, part of the 30S ribosomal subunit.

This chain is Small ribosomal subunit protein uS15, found in Nitrosopumilus maritimus (strain SCM1).